The chain runs to 765 residues: E3 ubiquitin-protein ligase SlrP (765 aa).

Positions 1–453 (MFNITNIQST…YQGPRVLFAM (453 aa)) are interaction with target proteins. LRR repeat units lie at residues 200-219 (QITT…ENLQ), 221-242 (NIKT…LPDT), 243-262 (IQEM…RLPS), 263-284 (ALQS…LPEE), 285-305 (LRYL…LPSE), 306-325 (ITHL…TLPP), 326-346 (GLKT…SLPP), 347-368 (ELQV…LPPT), 369-389 (ITTL…LPAA), and 390-410 (LQIM…LPHF). The segment at 454-461 (GDFSIVRV) is linker. Positions 462–765 (TRPLHQAVQG…VSSLMSAYWR (304 aa)) are E3 ubiquitin-protein ligase catalytic domain. Residues 464–758 (PLHQAVQGWL…NILLKKEVSS (295 aa)) form the NEL domain. C546 serves as the catalytic Glycyl thioester intermediate.

The protein belongs to the LRR-containing bacterial E3 ligase family. Interacts with host TXN. In terms of processing, ubiquitinated in the presence of host E1 ubiquitin-activating enzyme, E2 ubiquitin-conjugating enzyme and ubiquitin.

Its subcellular location is the secreted. It localises to the host cytoplasm. The enzyme catalyses S-ubiquitinyl-[E2 ubiquitin-conjugating enzyme]-L-cysteine + [acceptor protein]-L-lysine = [E2 ubiquitin-conjugating enzyme]-L-cysteine + N(6)-ubiquitinyl-[acceptor protein]-L-lysine.. Effector proteins function to alter host cell physiology and promote bacterial survival in host tissues. This protein is an E3 ubiquitin ligase that interferes with host's ubiquitination pathway. Can ubiquitinate both ubiquitin and host TXN (thioredoxin). Leads to significant decrease of thioredoxin activity and increase of host cell death. The protein is E3 ubiquitin-protein ligase SlrP (slrP) of Salmonella typhimurium (strain 14028s / SGSC 2262).